The chain runs to 614 residues: Major facilitator superfamily domain-containing protein 6-like protein B (614 aa).

Transmembrane regions (helical) follow at residues 41-61 and 78-98; these read LGLG…VHLL and FFIM…AFYP. Over residues 177 to 191 the composition is skewed to polar residues; it reads HQRFTDQFPSSSPLT. The interval 177-243 is disordered; that stretch reads HQRFTDQFPS…PFATHPNVSH (67 aa). Positions 205-227 are enriched in low complexity; the sequence is GSGKAQKANSSKSSASNSKQRSS. A run of 9 helical transmembrane segments spans residues 270–290, 312–332, 345–365, 393–413, 425–445, 457–477, 480–500, 520–540, and 546–566; these read IFLI…PLEW, LWIW…FLID, VSFH…LSTL, IVLT…IQNF, ELYM…LYFF, WMVV…SFLW, WSVV…WWAI, LRWL…GFII, and AVLY…FLLV.

This sequence belongs to the major facilitator superfamily. MFSD6 family.

The protein resides in the membrane. This is Major facilitator superfamily domain-containing protein 6-like protein B (mfsd6l-b) from Xenopus laevis (African clawed frog).